Consider the following 214-residue polypeptide: Octanoyltransferase (214 aa).

The 186-residue stretch at serine 29–threonine 214 folds into the BPL/LPL catalytic domain. Substrate contacts are provided by residues arginine 69 to histidine 76, alanine 146 to glycine 148, and glycine 159 to alanine 161. Cysteine 177 (acyl-thioester intermediate) is an active-site residue.

It belongs to the LipB family.

The protein localises to the cytoplasm. The catalysed reaction is octanoyl-[ACP] + L-lysyl-[protein] = N(6)-octanoyl-L-lysyl-[protein] + holo-[ACP] + H(+). It participates in protein modification; protein lipoylation via endogenous pathway; protein N(6)-(lipoyl)lysine from octanoyl-[acyl-carrier-protein]: step 1/2. In terms of biological role, catalyzes the transfer of endogenously produced octanoic acid from octanoyl-acyl-carrier-protein onto the lipoyl domains of lipoate-dependent enzymes. Lipoyl-ACP can also act as a substrate although octanoyl-ACP is likely to be the physiological substrate. In Polynucleobacter asymbioticus (strain DSM 18221 / CIP 109841 / QLW-P1DMWA-1) (Polynucleobacter necessarius subsp. asymbioticus), this protein is Octanoyltransferase.